The following is a 478-amino-acid chain: Glycogen synthase (478 aa).

An ADP-alpha-D-glucose-binding site is contributed by lysine 15.

It belongs to the glycosyltransferase 1 family. Bacterial/plant glycogen synthase subfamily.

It carries out the reaction [(1-&gt;4)-alpha-D-glucosyl](n) + ADP-alpha-D-glucose = [(1-&gt;4)-alpha-D-glucosyl](n+1) + ADP + H(+). The protein operates within glycan biosynthesis; glycogen biosynthesis. In terms of biological role, synthesizes alpha-1,4-glucan chains using ADP-glucose. The sequence is that of Glycogen synthase from Enterobacter sp. (strain 638).